A 546-amino-acid chain; its full sequence is CTP synthase (546 aa).

The interval 1–266 (MTKYIFVTGG…GDYLVERLGL (266 aa)) is amidoligase domain. Residue serine 13 participates in CTP binding. Serine 13 provides a ligand contact to UTP. 14 to 19 (SVGKGI) lines the ATP pocket. Tyrosine 54 contributes to the L-glutamine binding site. Aspartate 71 lines the ATP pocket. Mg(2+) contacts are provided by aspartate 71 and glutamate 141. Residues 148–150 (DIE), 187–192 (KTKPTQ), and lysine 223 each bind CTP. UTP-binding positions include 187 to 192 (KTKPTQ) and lysine 223. Residues 291–533 (PIALVGKYVE…VAAAAQTLLA (243 aa)) form the Glutamine amidotransferase type-1 domain. Glycine 353 lines the L-glutamine pocket. The active-site Nucleophile; for glutamine hydrolysis is the cysteine 380. L-glutamine contacts are provided by residues 381-384 (LGMQ), glutamate 404, and arginine 461. Active-site residues include histidine 506 and glutamate 508.

It belongs to the CTP synthase family. As to quaternary structure, homotetramer.

The catalysed reaction is UTP + L-glutamine + ATP + H2O = CTP + L-glutamate + ADP + phosphate + 2 H(+). It catalyses the reaction L-glutamine + H2O = L-glutamate + NH4(+). The enzyme catalyses UTP + NH4(+) + ATP = CTP + ADP + phosphate + 2 H(+). The protein operates within pyrimidine metabolism; CTP biosynthesis via de novo pathway; CTP from UDP: step 2/2. With respect to regulation, allosterically activated by GTP, when glutamine is the substrate; GTP has no effect on the reaction when ammonia is the substrate. The allosteric effector GTP functions by stabilizing the protein conformation that binds the tetrahedral intermediate(s) formed during glutamine hydrolysis. Inhibited by the product CTP, via allosteric rather than competitive inhibition. Functionally, catalyzes the ATP-dependent amination of UTP to CTP with either L-glutamine or ammonia as the source of nitrogen. Regulates intracellular CTP levels through interactions with the four ribonucleotide triphosphates. This chain is CTP synthase, found in Chloroflexus aurantiacus (strain ATCC 29366 / DSM 635 / J-10-fl).